Reading from the N-terminus, the 183-residue chain is Ribosome-recycling factor (183 aa).

Residues 134–156 form a disordered region; it reads DANDELKKHQSEMSQDEVKGHQD.

The protein belongs to the RRF family.

It localises to the cytoplasm. Responsible for the release of ribosomes from messenger RNA at the termination of protein biosynthesis. May increase the efficiency of translation by recycling ribosomes from one round of translation to another. The polypeptide is Ribosome-recycling factor (Leptospira biflexa serovar Patoc (strain Patoc 1 / Ames)).